Consider the following 79-residue polypeptide: Translational regulator CsrA (79 aa).

This sequence belongs to the CsrA/RsmA family. In terms of assembly, homodimer; the beta-strands of each monomer intercalate to form a hydrophobic core, while the alpha-helices form wings that extend away from the core.

The protein resides in the cytoplasm. In terms of biological role, a translational regulator that binds mRNA to regulate translation initiation and/or mRNA stability. Usually binds in the 5'-UTR at or near the Shine-Dalgarno sequence preventing ribosome-binding, thus repressing translation. Its main target seems to be the major flagellin gene, while its function is anatagonized by FliW. This is Translational regulator CsrA from Geobacter sulfurreducens (strain ATCC 51573 / DSM 12127 / PCA).